Consider the following 321-residue polypeptide: uncharacterized protein (321 aa).

Residues 1–6 (MDIIRK) are Extracellular-facing. Residues 7 to 29 (ISHFAGQTFGIWVIVFAVLGFSF) traverse the membrane as a helical segment. Residues 30 to 34 (PSLFT) lie on the Cytoplasmic side of the membrane. Residues 35 to 57 (WISSYITIFLGIIMFGMGLTLQA) form a helical membrane-spanning segment. Topologically, residues 58–69 (DDFKELVRKPWQ) are extracellular. A helical membrane pass occupies residues 70 to 92 (VIIGVIAQYTIMPLVAFGLAFGL). The Cytoplasmic portion of the chain corresponds to 93–97 (HLPAE). A helical membrane pass occupies residues 98–120 (IAVGVILVGCCPGGTASNVMTFL). Residues 121–129 (AKGNTALSV) lie on the Extracellular side of the membrane. Residues 130 to 150 (AVTTISTLLAPVVTPLLIMLF) traverse the membrane as a helical segment. Residues 151 to 159 (AKEWLPVSP) are Cytoplasmic-facing. The helical transmembrane segment at 160 to 180 (GSLFISILQAVLFPIIAGLIV) threads the bilayer. Topologically, residues 181–190 (KMFFRKQVAK) are extracellular. Residues 191-211 (AVHALPLVSVIGIVAIVSAVV) traverse the membrane as a helical segment. Over 212-221 (SGNRENLLQS) the chain is Cytoplasmic. Residues 222-242 (GLLIFSVVILHNGIGYLLGFL) form a helical membrane-spanning segment. At 243–267 (CAKLLKMDYPSQKAIAIEVGMQNSG) the chain is on the extracellular side. Residues 268-288 (LGAALATAHFSPLSAVPSAIF) traverse the membrane as a helical segment. Residues 289 to 321 (SVWHNLSGSMLATYWSKKVKKKQAGSKSSNLSL) are Cytoplasmic-facing.

The protein belongs to the bile acid:sodium symporter (BASS) (TC 2.A.28) family.

The protein localises to the cell membrane. This is an uncharacterized protein from Bacillus subtilis (strain 168).